The sequence spans 172 residues: Ribosome maturation factor RimM (172 aa).

A PRC barrel domain is found at alanine 95–leucine 168.

The protein belongs to the RimM family. In terms of assembly, binds ribosomal protein uS19.

Its subcellular location is the cytoplasm. In terms of biological role, an accessory protein needed during the final step in the assembly of 30S ribosomal subunit, possibly for assembly of the head region. Essential for efficient processing of 16S rRNA. May be needed both before and after RbfA during the maturation of 16S rRNA. It has affinity for free ribosomal 30S subunits but not for 70S ribosomes. The polypeptide is Ribosome maturation factor RimM (Streptococcus equi subsp. zooepidemicus (strain H70)).